A 75-amino-acid chain; its full sequence is UPF0512 protein C (75 aa).

The protein belongs to the UPF0512 family.

This chain is UPF0512 protein C, found in Dictyostelium discoideum (Social amoeba).